Consider the following 184-residue polypeptide: ATP synthase subunit b, chloroplastic (184 aa).

A helical membrane pass occupies residues Leu-27–Leu-49.

Belongs to the ATPase B chain family. F-type ATPases have 2 components, F(1) - the catalytic core - and F(0) - the membrane proton channel. F(1) has five subunits: alpha(3), beta(3), gamma(1), delta(1), epsilon(1). F(0) has four main subunits: a(1), b(1), b'(1) and c(10-14). The alpha and beta chains form an alternating ring which encloses part of the gamma chain. F(1) is attached to F(0) by a central stalk formed by the gamma and epsilon chains, while a peripheral stalk is formed by the delta, b and b' chains.

It localises to the plastid. The protein resides in the chloroplast thylakoid membrane. Its function is as follows. F(1)F(0) ATP synthase produces ATP from ADP in the presence of a proton or sodium gradient. F-type ATPases consist of two structural domains, F(1) containing the extramembraneous catalytic core and F(0) containing the membrane proton channel, linked together by a central stalk and a peripheral stalk. During catalysis, ATP synthesis in the catalytic domain of F(1) is coupled via a rotary mechanism of the central stalk subunits to proton translocation. Functionally, component of the F(0) channel, it forms part of the peripheral stalk, linking F(1) to F(0). This Solanum bulbocastanum (Wild potato) protein is ATP synthase subunit b, chloroplastic.